The chain runs to 353 residues: Probable transport protein YPL264C (353 aa).

At Met-1 to Gly-16 the chain is on the cytoplasmic side. The chain crosses the membrane as a helical span at residues Leu-17–Leu-37. Residues Tyr-24–Arg-160 enclose the EamA 1 domain. Over Glu-38–Pro-51 the chain is Extracellular. The chain crosses the membrane as a helical span at residues Leu-52–Tyr-69. Residues Met-70–Arg-94 lie on the Cytoplasmic side of the membrane. A helical transmembrane segment spans residues Gly-95–Ser-115. Asp-116 is a topological domain (extracellular). Residues Ala-117–Gly-137 form a helical membrane-spanning segment. Residues Glu-138–Glu-144 lie on the Cytoplasmic side of the membrane. A helical transmembrane segment spans residues Ala-145 to Phe-165. Residues Gly-166 to Arg-188 are Extracellular-facing. The chain crosses the membrane as a helical span at residues Leu-189–Ile-209. In terms of domain architecture, EamA 2 spans Cys-200 to Asn-326. Residues Arg-210–Ala-218 are Cytoplasmic-facing. A helical membrane pass occupies residues Ile-219–Leu-239. Residues Ile-240–Trp-254 lie on the Extracellular side of the membrane. Residues Gly-255–Ile-275 traverse the membrane as a helical segment. The Cytoplasmic portion of the chain corresponds to Gln-276 to Arg-282. The helical transmembrane segment at Gly-283–His-303 threads the bilayer. A topological domain (extracellular) is located at residue His-304. A helical transmembrane segment spans residues Trp-305–Ile-325. At Asn-326 to Asp-353 the chain is on the cytoplasmic side.

It localises to the membrane. The protein is Probable transport protein YPL264C of Saccharomyces cerevisiae (strain ATCC 204508 / S288c) (Baker's yeast).